Here is a 417-residue protein sequence, read N- to C-terminus: Serine hydroxymethyltransferase (417 aa).

(6S)-5,6,7,8-tetrahydrofolate is bound by residues Leu-121 and 125 to 127 (GHL). Lys-229 carries the post-translational modification N6-(pyridoxal phosphate)lysine. A (6S)-5,6,7,8-tetrahydrofolate-binding site is contributed by 355-357 (SPF).

Belongs to the SHMT family. As to quaternary structure, homodimer. Pyridoxal 5'-phosphate serves as cofactor.

It localises to the cytoplasm. It catalyses the reaction (6R)-5,10-methylene-5,6,7,8-tetrahydrofolate + glycine + H2O = (6S)-5,6,7,8-tetrahydrofolate + L-serine. It functions in the pathway one-carbon metabolism; tetrahydrofolate interconversion. It participates in amino-acid biosynthesis; glycine biosynthesis; glycine from L-serine: step 1/1. Its function is as follows. Catalyzes the reversible interconversion of serine and glycine with tetrahydrofolate (THF) serving as the one-carbon carrier. This reaction serves as the major source of one-carbon groups required for the biosynthesis of purines, thymidylate, methionine, and other important biomolecules. Also exhibits THF-independent aldolase activity toward beta-hydroxyamino acids, producing glycine and aldehydes, via a retro-aldol mechanism. This chain is Serine hydroxymethyltransferase, found in Shewanella oneidensis (strain ATCC 700550 / JCM 31522 / CIP 106686 / LMG 19005 / NCIMB 14063 / MR-1).